We begin with the raw amino-acid sequence, 355 residues long: 3-dehydroquinate synthase (355 aa).

NAD(+)-binding positions include 71 to 76 (EGEERK), 105 to 109 (GVVGD), 129 to 130 (TS), Lys-142, and Lys-151. Zn(2+) is bound by residues Glu-184, His-246, and His-263.

Belongs to the sugar phosphate cyclases superfamily. Dehydroquinate synthase family. It depends on Co(2+) as a cofactor. The cofactor is Zn(2+). NAD(+) serves as cofactor.

The protein resides in the cytoplasm. It catalyses the reaction 7-phospho-2-dehydro-3-deoxy-D-arabino-heptonate = 3-dehydroquinate + phosphate. Its pathway is metabolic intermediate biosynthesis; chorismate biosynthesis; chorismate from D-erythrose 4-phosphate and phosphoenolpyruvate: step 2/7. Catalyzes the conversion of 3-deoxy-D-arabino-heptulosonate 7-phosphate (DAHP) to dehydroquinate (DHQ). In Streptococcus pneumoniae (strain JJA), this protein is 3-dehydroquinate synthase.